The following is a 353-amino-acid chain: Protein RecA (353 aa).

74–81 (GPESSGKT) serves as a coordination point for ATP.

This sequence belongs to the RecA family.

The protein resides in the cytoplasm. Its function is as follows. Can catalyze the hydrolysis of ATP in the presence of single-stranded DNA, the ATP-dependent uptake of single-stranded DNA by duplex DNA, and the ATP-dependent hybridization of homologous single-stranded DNAs. It interacts with LexA causing its activation and leading to its autocatalytic cleavage. This is Protein RecA from Bordetella bronchiseptica (strain ATCC BAA-588 / NCTC 13252 / RB50) (Alcaligenes bronchisepticus).